The primary structure comprises 481 residues: Matrix metalloproteinase-20 (481 aa).

The first 20 residues, Met-1–Ala-20, serve as a signal peptide directing secretion. Positions Ala-21 to Asn-105 are excised as a propeptide. N-linked (GlcNAc...) asparagine glycosylation occurs at Asn-64. Residues Pro-96–Val-103 carry the Cysteine switch motif. Cys-98 serves as a coordination point for Zn(2+). Glu-162, Ala-163, and Asp-164 together coordinate Ca(2+). Zn(2+) contacts are provided by His-174 and Asp-176. The Ca(2+) site is built by Asp-181, Gly-182, Arg-184, and Thr-186. His-189 contacts Zn(2+). 4 residues coordinate Ca(2+): Glu-195, Gly-196, Gly-198, and Asp-200. His-202 provides a ligand contact to Zn(2+). The Ca(2+) site is built by Asp-204 and Glu-207. Residue His-224 participates in Zn(2+) binding. Glu-225 is an active-site residue. Zn(2+)-binding residues include His-228 and His-234. Hemopexin repeat units follow at residues Pro-291–Leu-341, Met-342–Arg-387, Val-389–Val-437, and Asn-438–Cys-481. Cysteines 294 and 481 form a disulfide. Residue Asn-297 is glycosylated (N-linked (GlcNAc...) asparagine).

Belongs to the peptidase M10A family. The cofactor is Zn(2+). Ca(2+) is required as a cofactor. In terms of processing, autoactivates at least at the 105-Asn-|-Tyr-106 site. In terms of tissue distribution, expressed in the enamel organ.

It is found in the secreted. The protein resides in the extracellular space. It localises to the extracellular matrix. Functionally, degrades amelogenin, the major protein component of the enamel matrix and two of the macromolecules characterizing the cartilage extracellular matrix: aggrecan and the cartilage oligomeric matrix protein (COMP). May play a central role in tooth enamel formation. Cleaves aggrecan at the '360-Ser-|-Phe-361' site. This Bos taurus (Bovine) protein is Matrix metalloproteinase-20 (MMP20).